The sequence spans 103 residues: Integration host factor subunit alpha (103 aa).

It belongs to the bacterial histone-like protein family. In terms of assembly, heterodimer of an alpha and a beta chain.

This protein is one of the two subunits of integration host factor, a specific DNA-binding protein that functions in genetic recombination as well as in transcriptional and translational control. This Aromatoleum aromaticum (strain DSM 19018 / LMG 30748 / EbN1) (Azoarcus sp. (strain EbN1)) protein is Integration host factor subunit alpha.